Here is a 303-residue protein sequence, read N- to C-terminus: 4-diphosphocytidyl-2-C-methyl-D-erythritol kinase (303 aa).

Lys21 is an active-site residue. 106–116 (PVAAGIGGGSA) serves as a coordination point for ATP. Asp148 is an active-site residue.

It belongs to the GHMP kinase family. IspE subfamily.

The catalysed reaction is 4-CDP-2-C-methyl-D-erythritol + ATP = 4-CDP-2-C-methyl-D-erythritol 2-phosphate + ADP + H(+). Its pathway is isoprenoid biosynthesis; isopentenyl diphosphate biosynthesis via DXP pathway; isopentenyl diphosphate from 1-deoxy-D-xylulose 5-phosphate: step 3/6. Catalyzes the phosphorylation of the position 2 hydroxy group of 4-diphosphocytidyl-2C-methyl-D-erythritol. In Nitrobacter hamburgensis (strain DSM 10229 / NCIMB 13809 / X14), this protein is 4-diphosphocytidyl-2-C-methyl-D-erythritol kinase.